The following is a 372-amino-acid chain: Pristinol synthase (372 aa).

The span at 1–12 (MAHETTSGRRLP) shows a compositional bias: basic and acidic residues. Positions 1-23 (MAHETTSGRRLPDPTSPSDPTRR) are disordered. Residues Asp-100 and Asp-104 each contribute to the Mg(2+) site. The short motif at 100–104 (DDQFD) is the DDXXD motif element. Residue Arg-197 participates in substrate binding. Mg(2+)-binding residues include Asn-243 and Ser-247. Lys-250 contributes to the substrate binding site. Glu-251 contributes to the Mg(2+) binding site. A substrate-binding site is contributed by 337-338 (RY). Positions 349 to 372 (GRRRPWDGLTTATGTASPRHPRRA) are disordered.

The protein belongs to the terpene synthase family. The cofactor is Mg(2+).

It carries out the reaction (2E,6E)-farnesyl diphosphate + H2O = (+)-(2S,3R,9R)-pristinol + diphosphate. Its pathway is secondary metabolite biosynthesis; terpenoid biosynthesis. Catalyzes the conversion of (2E,6E)-farnesyl diphosphate (FPP) to yield a new 5-8 bicyclic (pristinane) sesquiterpenol (+)-(2S,3R,9R)-pristinol via a 1,11-cyclization, which requires the abstraction of the pyrophosphate from FPP to yield the humulyl cation. The only accepted substrate is farnesyl diphosphate (FPP). The protein is Pristinol synthase of Streptomyces pristinaespiralis (strain ATCC 25486 / DSM 40338 / CBS 914.69 / JCM 4507 / KCC S-0507 / NBRC 13074 / NRRL 2958 / 5647).